Consider the following 109-residue polypeptide: Parvalbumin alpha (109 aa).

EF-hand domains are found at residues 38 to 73 (KTDA…FSAH) and 77 to 109 (LNDT…VAQA). Residues aspartate 51, aspartate 53, serine 55, glutamate 62, aspartate 90, aspartate 92, aspartate 94, lysine 96, and glutamate 101 each coordinate Ca(2+).

Belongs to the parvalbumin family.

In muscle, parvalbumin is thought to be involved in relaxation after contraction. It binds two calcium ions. This is Parvalbumin alpha from Triakis semifasciata (Leopard shark).